Reading from the N-terminus, the 174-residue chain is Transmembrane protein 208 (174 aa).

Helical transmembrane passes span 30–50 (NMAI…FEVT), 54–74 (VFMH…MAFM), and 111–131 (GTLL…LAPI). Residues 151 to 174 (AQDDNPQVDEKKQKKMDRRMRRMR) are disordered. Residues 163–174 (QKKMDRRMRRMR) show a composition bias toward basic residues.

Belongs to the TMEM208 family. As to quaternary structure, interacts with fz. Expressed in the brain.

It is found in the endoplasmic reticulum membrane. Functionally, may play an important role during development and helps to maintain proper levels of Fz. In Drosophila melanogaster (Fruit fly), this protein is Transmembrane protein 208.